We begin with the raw amino-acid sequence, 214 residues long: Superoxide dismutase [Mn/Fe] (214 aa).

Fe(3+) contacts are provided by histidine 31, histidine 79, aspartate 165, and histidine 169. Residues histidine 31, histidine 79, aspartate 165, and histidine 169 each coordinate Mn(2+).

Belongs to the iron/manganese superoxide dismutase family. It depends on Mn(2+) as a cofactor. The cofactor is Fe(3+).

The catalysed reaction is 2 superoxide + 2 H(+) = H2O2 + O2. Destroys superoxide anion radicals which are normally produced within the cells and which are toxic to biological systems. Catalyzes the dismutation of superoxide anion radicals into O2 and H2O2 by successive reduction and oxidation of the transition metal ion at the active site. This chain is Superoxide dismutase [Mn/Fe] (sod), found in Aeropyrum pernix (strain ATCC 700893 / DSM 11879 / JCM 9820 / NBRC 100138 / K1).